Consider the following 188-residue polypeptide: Large ribosomal subunit protein eL18 (188 aa).

The tract at residues Glu-147–Asn-188 is disordered. 2 stretches are compositionally biased toward basic residues: residues Ser-161–Gly-171 and Arg-178–Asn-188.

It belongs to the eukaryotic ribosomal protein eL18 family.

The protein localises to the cytoplasm. The chain is Large ribosomal subunit protein eL18 (rpl-18) from Caenorhabditis elegans.